A 287-amino-acid chain; its full sequence is Homoserine kinase (287 aa).

78-88 (PLAHGLGSSSS) is a binding site for ATP.

Belongs to the GHMP kinase family. Homoserine kinase subfamily.

It localises to the cytoplasm. The enzyme catalyses L-homoserine + ATP = O-phospho-L-homoserine + ADP + H(+). The protein operates within amino-acid biosynthesis; L-threonine biosynthesis; L-threonine from L-aspartate: step 4/5. Functionally, catalyzes the ATP-dependent phosphorylation of L-homoserine to L-homoserine phosphate. The polypeptide is Homoserine kinase (Lactobacillus acidophilus (strain ATCC 700396 / NCK56 / N2 / NCFM)).